A 91-amino-acid polypeptide reads, in one-letter code: Small ribosomal subunit protein uS19 (91 aa).

Belongs to the universal ribosomal protein uS19 family.

Protein S19 forms a complex with S13 that binds strongly to the 16S ribosomal RNA. The chain is Small ribosomal subunit protein uS19 from Marinomonas sp. (strain MWYL1).